The primary structure comprises 122 residues: Large ribosomal subunit protein uL14 (122 aa).

It belongs to the universal ribosomal protein uL14 family. In terms of assembly, part of the 50S ribosomal subunit. Forms a cluster with proteins L3 and L19. In the 70S ribosome, L14 and L19 interact and together make contacts with the 16S rRNA in bridges B5 and B8.

In terms of biological role, binds to 23S rRNA. Forms part of two intersubunit bridges in the 70S ribosome. In Geobacillus sp. (strain WCH70), this protein is Large ribosomal subunit protein uL14.